The sequence spans 188 residues: Peptidyl-tRNA hydrolase (188 aa).

Tyrosine 14 serves as a coordination point for tRNA. Histidine 19 serves as the catalytic Proton acceptor. TRNA is bound by residues tyrosine 64, asparagine 66, and asparagine 113.

It belongs to the PTH family. Monomer.

It is found in the cytoplasm. The catalysed reaction is an N-acyl-L-alpha-aminoacyl-tRNA + H2O = an N-acyl-L-amino acid + a tRNA + H(+). In terms of biological role, hydrolyzes ribosome-free peptidyl-tRNAs (with 1 or more amino acids incorporated), which drop off the ribosome during protein synthesis, or as a result of ribosome stalling. Catalyzes the release of premature peptidyl moieties from peptidyl-tRNA molecules trapped in stalled 50S ribosomal subunits, and thus maintains levels of free tRNAs and 50S ribosomes. The protein is Peptidyl-tRNA hydrolase of Chloroflexus aurantiacus (strain ATCC 29364 / DSM 637 / Y-400-fl).